The sequence spans 260 residues: Acetylglutamate kinase (260 aa).

Substrate-binding positions include 46 to 47 (GG), R68, and N160.

Belongs to the acetylglutamate kinase family. ArgB subfamily.

It localises to the cytoplasm. The enzyme catalyses N-acetyl-L-glutamate + ATP = N-acetyl-L-glutamyl 5-phosphate + ADP. It functions in the pathway amino-acid biosynthesis; L-arginine biosynthesis; N(2)-acetyl-L-ornithine from L-glutamate: step 2/4. Its function is as follows. Catalyzes the ATP-dependent phosphorylation of N-acetyl-L-glutamate. This Shewanella sp. (strain MR-7) protein is Acetylglutamate kinase.